A 304-amino-acid polypeptide reads, in one-letter code: Thyroxine 5-deiodinase (304 aa).

The disordered stretch occupies residues 1-22; it reads MPRQAASRLVVGEGEGPPGASG. Topologically, residues 1-44 are cytoplasmic; it reads MPRQAASRLVVGEGEGPPGASGPAATMLRSLLLHSLRLCAQTAS. Residues 45-67 form a helical; Signal-anchor for type II membrane protein membrane-spanning segment; it reads CLVLFPRFLGTAFMLWLLDFLCI. Residues 68 to 304 are Extracellular-facing; it reads RKHFLRRRHP…QLHGTRPHRF (237 aa). U170 is an active-site residue. Residue U170 is a non-standard amino acid, selenocysteine.

Belongs to the iodothyronine deiodinase family. In terms of assembly, monomer. Homodimer. May undergo minor heretodimerization with DIO1 and DIO2.

The protein resides in the cell membrane. It localises to the endosome membrane. It catalyses the reaction 3,3',5'-triiodo-L-thyronine + iodide + A + H(+) = L-thyroxine + AH2. It carries out the reaction 3,3'-diiodo-L-thyronine + iodide + A + H(+) = 3,3',5-triiodo-L-thyronine + AH2. The catalysed reaction is 3-iodo-L-thyronine + iodide + A + H(+) = 3,5-diiodo-L-thyronine + AH2. The enzyme catalyses L-thyronine + iodide + A + H(+) = 3-iodo-L-thyronine + AH2. It catalyses the reaction 3',5'-diiodo-L-thyronine + iodide + A + H(+) = 3,3',5'-triiodo-L-thyronine + AH2. It carries out the reaction 3'-iodo-L-thyronine + iodide + A + H(+) = 3,3'-diiodo-L-thyronine + AH2. The catalysed reaction is 3,3',5'-triiodothyronamine + iodide + A + H(+) = 3,3',5,5'-tetraiodothyronamine + AH2. The enzyme catalyses 3',5'-diiodothyronamine + iodide + A + H(+) = 3,3',5'-triiodothyronamine + AH2. It catalyses the reaction 3,3'-diiodothyronamine + iodide + A + H(+) = 3,3',5-triiodothyronamine + AH2. It carries out the reaction 3-iodothyronamine + iodide + A + H(+) = 3,5-diiodothyronamine + AH2. The catalysed reaction is 3'-iodothyronamine + iodide + A + H(+) = 3,3'-diiodothyronamine + AH2. The enzyme catalyses thyronamine + iodide + A + H(+) = 3-iodothyronamine + AH2. Its function is as follows. Plays a crucial role in the metabolism of thyroid hormones (TH) and has specific roles in TH activation and inactivation by deiodination. Catalyzes the deiodination of L-thyroxine (T4) to 3,3',5'-triiodothyronine (rT3), 3,5,3'-triiodothyronine (T3) to 3,3'-diiodothyronine (3,3'-T2), 3,5-diiodothyronine (3,5-T2) to 3-monoiodothyronine (3-T1), rT3 to 3',5'-diiodothyronine (3',5'-T2) and 3,3'-T2 to 3'-monoiodothyronine (3'-T1) via inner-ring deiodination (IRD). Catalyzes the deiodination of 3-T1 to L-thyronine (T0) via outer-ring deiodination (ORD). Catalyzes the tyrosyl ring deiodinations of 3,3',5,5'-tetraiodothyronamine, 3,3',5'-triiodothyronamine, 3,5,3'-triiodothyronamine, 3,5-diiodothyronamine, 3,3'-diiodothyronamine and 3-iodothyronamine. The protein is Thyroxine 5-deiodinase (Dio3) of Mus musculus (Mouse).